Here is a 192-residue protein sequence, read N- to C-terminus: MVYPIRLYGDPVLRRKARPVEDFSGIKRLAEDMLETMFEAKGVGLAAPQIGLSQRLFVAVEYADEPEGEEERPLRELVRRVYVVANPVITYREGLVEGTEGCLSLPGLYSEEVPRAERIRVEYQDEEGRGRVLELEGYMARVFQHEIDHLDGILFFERLPKPKREAFLEANRAELVRFQKEARALLKELSQG.

Fe cation-binding residues include cysteine 102 and histidine 145. Residue glutamate 146 is part of the active site. Histidine 149 is a binding site for Fe cation.

It belongs to the polypeptide deformylase family. It depends on Fe(2+) as a cofactor.

The catalysed reaction is N-terminal N-formyl-L-methionyl-[peptide] + H2O = N-terminal L-methionyl-[peptide] + formate. Functionally, removes the formyl group from the N-terminal Met of newly synthesized proteins. Requires at least a dipeptide for an efficient rate of reaction. N-terminal L-methionine is a prerequisite for activity but the enzyme has broad specificity at other positions. The chain is Peptide deformylase from Thermus thermophilus (strain ATCC BAA-163 / DSM 7039 / HB27).